We begin with the raw amino-acid sequence, 439 residues long: Ribosomal protein uS12 methylthiotransferase RimO (439 aa).

Positions 7 to 119 (KQLCLISLGC…IDIMIAKKQN (113 aa)) constitute an MTTase N-terminal domain. Positions 16, 50, 82, 151, 155, and 158 each coordinate [4Fe-4S] cluster. The 229-residue stretch at 137-365 (TGSSVHAYVK…NKIALKHQNN (229 aa)) folds into the Radical SAM core domain.

Belongs to the methylthiotransferase family. RimO subfamily. It depends on [4Fe-4S] cluster as a cofactor.

Its subcellular location is the cytoplasm. It catalyses the reaction L-aspartate(89)-[ribosomal protein uS12]-hydrogen + (sulfur carrier)-SH + AH2 + 2 S-adenosyl-L-methionine = 3-methylsulfanyl-L-aspartate(89)-[ribosomal protein uS12]-hydrogen + (sulfur carrier)-H + 5'-deoxyadenosine + L-methionine + A + S-adenosyl-L-homocysteine + 2 H(+). Catalyzes the methylthiolation of an aspartic acid residue of ribosomal protein uS12. The chain is Ribosomal protein uS12 methylthiotransferase RimO from Helicobacter pylori (strain Shi470).